The following is a 246-amino-acid chain: tRNA (guanine-N(1)-)-methyltransferase (246 aa).

Residues Gly-114 and 134-139 (IGDYIL) each bind S-adenosyl-L-methionine.

It belongs to the RNA methyltransferase TrmD family. In terms of assembly, homodimer.

Its subcellular location is the cytoplasm. The enzyme catalyses guanosine(37) in tRNA + S-adenosyl-L-methionine = N(1)-methylguanosine(37) in tRNA + S-adenosyl-L-homocysteine + H(+). Functionally, specifically methylates guanosine-37 in various tRNAs. The chain is tRNA (guanine-N(1)-)-methyltransferase from Coxiella burnetii (strain RSA 493 / Nine Mile phase I).